We begin with the raw amino-acid sequence, 203 residues long: NADH-quinone oxidoreductase subunit C (203 aa).

It belongs to the complex I 30 kDa subunit family. In terms of assembly, NDH-1 is composed of 14 different subunits. Subunits NuoB, C, D, E, F, and G constitute the peripheral sector of the complex.

It is found in the cell inner membrane. It catalyses the reaction a quinone + NADH + 5 H(+)(in) = a quinol + NAD(+) + 4 H(+)(out). Functionally, NDH-1 shuttles electrons from NADH, via FMN and iron-sulfur (Fe-S) centers, to quinones in the respiratory chain. The immediate electron acceptor for the enzyme in this species is believed to be ubiquinone. Couples the redox reaction to proton translocation (for every two electrons transferred, four hydrogen ions are translocated across the cytoplasmic membrane), and thus conserves the redox energy in a proton gradient. The protein is NADH-quinone oxidoreductase subunit C of Methylibium petroleiphilum (strain ATCC BAA-1232 / LMG 22953 / PM1).